Reading from the N-terminus, the 169-residue chain is Macrocypin-1a (169 aa).

This sequence belongs to the protease inhibitor I85 family.

Inhibits papain and cysteine cathepsin endopeptidases, and also inhibits cathepsins B and H, which exhibit both exopeptidase and endopeptidase activities. The chain is Macrocypin-1a from Macrolepiota procera (Parasol mushroom).